The sequence spans 466 residues: ATP synthase subunit beta (466 aa).

Gly-148–Thr-155 provides a ligand contact to ATP.

Belongs to the ATPase alpha/beta chains family. In terms of assembly, F-type ATPases have 2 components, CF(1) - the catalytic core - and CF(0) - the membrane proton channel. CF(1) has five subunits: alpha(3), beta(3), gamma(1), delta(1), epsilon(1). CF(0) has three main subunits: a(1), b(2) and c(9-12). The alpha and beta chains form an alternating ring which encloses part of the gamma chain. CF(1) is attached to CF(0) by a central stalk formed by the gamma and epsilon chains, while a peripheral stalk is formed by the delta and b chains.

It is found in the cell inner membrane. The catalysed reaction is ATP + H2O + 4 H(+)(in) = ADP + phosphate + 5 H(+)(out). In terms of biological role, produces ATP from ADP in the presence of a proton gradient across the membrane. The catalytic sites are hosted primarily by the beta subunits. The polypeptide is ATP synthase subunit beta (Herminiimonas arsenicoxydans).